Here is a 328-residue protein sequence, read N- to C-terminus: 5,10-methylenetetrahydromethanopterin reductase (328 aa).

Belongs to the mer family.

Its subcellular location is the cytoplasm. The catalysed reaction is 5-methyl-5,6,7,8-tetrahydromethanopterin + oxidized coenzyme F420-(gamma-L-Glu)(n) + H(+) = 5,10-methylenetetrahydromethanopterin + reduced coenzyme F420-(gamma-L-Glu)(n). Its pathway is one-carbon metabolism; methanogenesis from CO(2); methyl-coenzyme M from 5,10-methylene-5,6,7,8-tetrahydromethanopterin: step 1/2. Catalyzes the reversible reduction of methylene-H(4)MPT to methyl-H(4)MPT. This chain is 5,10-methylenetetrahydromethanopterin reductase, found in Methanosarcina mazei (strain ATCC BAA-159 / DSM 3647 / Goe1 / Go1 / JCM 11833 / OCM 88) (Methanosarcina frisia).